The following is a 556-amino-acid chain: Testis-specific protein 10-interacting protein (556 aa).

Residues 1-20 (MGQETNMLNAHQQLVRTSSG) show a composition bias toward polar residues. Disordered stretches follow at residues 1-102 (MGQE…SPRK) and 180-320 (CTSI…GPWD). Over residues 75–85 (KDRRLRGRNKK) the composition is skewed to basic residues. Acidic residues-rich tracts occupy residues 213–225 (EPEESEPEGLGAE) and 246–260 (LEEEQFSEATEEAED). A compositionally biased stretch (basic residues) spans 266–278 (PWRRRTSSRRKGR). Positions 304–320 (EPQRRKPRAKELEGPWD) are enriched in basic and acidic residues. A coiled-coil region spans residues 387 to 463 (LRAWELQQRE…ELQGIQHRVQ (77 aa)). Positions 503 to 556 (AGKRDMEGAPRRHRSHRSVGARMEPSSQSPPKMEPTGSQADQHFAPNPDQELSP) are disordered. Positions 527–543 (PSSQSPPKMEPTGSQAD) are enriched in polar residues.

The protein is Testis-specific protein 10-interacting protein (TSGA10IP) of Bos taurus (Bovine).